Reading from the N-terminus, the 293-residue chain is FAS1 domain-containing protein DEHA2G15708g (293 aa).

Positions 1-18 are cleaved as a signal peptide; it reads MKLSSILYVSVLAHLVMS. Residues 76-87 are compositionally biased toward basic and acidic residues; the sequence is DHIGENEKREAK. The disordered stretch occupies residues 76-126; that stretch reads DHIGENEKREAKNVYNLQSLKEGLDDENDKREGNVNKPEVSEEGSNKGDKR. One can recognise an FAS1 domain in the interval 141–290; the sequence is QNLLQSILPQ…GYIFVINDVL (150 aa).

It localises to the vacuole. The protein is FAS1 domain-containing protein DEHA2G15708g of Debaryomyces hansenii (strain ATCC 36239 / CBS 767 / BCRC 21394 / JCM 1990 / NBRC 0083 / IGC 2968) (Yeast).